Here is a 291-residue protein sequence, read N- to C-terminus: BTB/POZ domain-containing protein 19 (291 aa).

The 70-residue stretch at 29–98 (SDVRFVVGQE…LYTNSAKLQR (70 aa)) folds into the BTB domain. Residues 134 to 234 (CEALQVAVTF…LALLAPAELS (101 aa)) form the BACK domain.

This is BTB/POZ domain-containing protein 19 (BTBD19) from Bos taurus (Bovine).